Reading from the N-terminus, the 420-residue chain is Pre-mRNA-splicing factor RBM22 (420 aa).

A C3H1-type zinc finger spans residues 159-186 (RNRPHICSFWVKGECKRGEECPYRHEKP). Residues 232 to 305 (TTLYVGGLGD…RRLNVKWGRS (74 aa)) form the RRM domain. Disordered regions lie at residues 303-343 (GRSQ…AAEE) and 372-420 (APPP…HSSP). Basic and acidic residues predominate over residues 309–318 (RGKEKDKEGT).

It belongs to the SLT11 family. In terms of assembly, component of the pre-catalytic and catalytic spliceosome complexes. Component of the postcatalytic spliceosome P complex.

The protein localises to the nucleus. Its subcellular location is the cytoplasm. Functionally, required for pre-mRNA splicing as component of the activated spliceosome. Involved in the first step of pre-mRNA splicing. Binds directly to the internal stem-loop (ISL) domain of the U6 snRNA and to the pre-mRNA intron near the 5' splice site during the activation and catalytic phases of the spliceosome cycle. This chain is Pre-mRNA-splicing factor RBM22 (RBM22), found in Gallus gallus (Chicken).